A 337-amino-acid chain; its full sequence is MSLERCQSEWTEIEQEYQQLQETHKVYRQKLEELTNLQAICSSAISKQRKGLKDLKQSLYKCKKSCNGKDSEVINDLQVQIKERQNVFFDMEAYLPKRNGLYLNLVLGNVNVTLLSNQAKFAYKDEYEKFKLYMTIILMFGAVTCLFLLNYRVTDEIFNFLLVWYYCTLTIRESILRSNGSRIKGWWVSHHYVSTFLSGVMLTWPEGPMYQMFRSQFLAFSIYQSCVQFLQYYYQSGCLYRLRALGERNQLDLTVEGFQSWMWRGLTFLLPFLFFGHFWQLYNAVTLFRLSALDDCKEWQVFMLALTFLVLFLGNFLTTLKVVHQKLLKNKDKVKNN.

The stretch at 1–39 (MSLERCQSEWTEIEQEYQQLQETHKVYRQKLEELTNLQA) forms a coiled coil. 6 helical membrane-spanning segments follow: residues 100-122 (GLYL…AKFA), 130-150 (FKLY…FLLN), 157-175 (IFNF…RESI), 185-205 (GWWV…LTWP), 268-288 (FLLP…VTLF), and 300-320 (QVFM…LTTL).

Belongs to the TMEM120 family.

Its subcellular location is the nucleus inner membrane. Necessary for efficient adipogenesis. Does not show ion channel activity. This Danio rerio (Zebrafish) protein is Transmembrane protein 120B (tmem120b).